The following is a 448-amino-acid chain: Serine--tRNA ligase (448 aa).

255–257 (TSE) contacts L-serine. 286–288 (RSE) serves as a coordination point for ATP. Glu309 is a binding site for L-serine. 373–376 (EISS) provides a ligand contact to ATP. Ser408 lines the L-serine pocket.

This sequence belongs to the class-II aminoacyl-tRNA synthetase family. Type-1 seryl-tRNA synthetase subfamily. In terms of assembly, homodimer. The tRNA molecule binds across the dimer.

The protein localises to the cytoplasm. It carries out the reaction tRNA(Ser) + L-serine + ATP = L-seryl-tRNA(Ser) + AMP + diphosphate + H(+). The enzyme catalyses tRNA(Sec) + L-serine + ATP = L-seryl-tRNA(Sec) + AMP + diphosphate + H(+). Its pathway is aminoacyl-tRNA biosynthesis; selenocysteinyl-tRNA(Sec) biosynthesis; L-seryl-tRNA(Sec) from L-serine and tRNA(Sec): step 1/1. Its function is as follows. Catalyzes the attachment of serine to tRNA(Ser). Is also able to aminoacylate tRNA(Sec) with serine, to form the misacylated tRNA L-seryl-tRNA(Sec), which will be further converted into selenocysteinyl-tRNA(Sec). In Bordetella petrii (strain ATCC BAA-461 / DSM 12804 / CCUG 43448), this protein is Serine--tRNA ligase.